Consider the following 894-residue polypeptide: Cell wall-associated protease (894 aa).

An N-terminal signal peptide occupies residues 1–31 (MKRRKFSSVVAAVLIFALIFSLFSPGTKAAA). The region spanning 422 to 729 (QWPLKNNGEN…YGRLNVMKAV (308 aa)) is the Peptidase S8 domain. Active-site charge relay system residues include aspartate 462, histidine 497, and serine 650.

The protein belongs to the peptidase S8 family. In terms of processing, proteolytically cleaved to yield CWBP23 and CWBP52.

It localises to the secreted. The protein localises to the cell wall. Its activity is regulated as follows. Inhibited by PMSF. CWBP52 is a serine-type protease that could be involved in proteoglycan peptide bridges. The protein is Cell wall-associated protease (wprA) of Bacillus subtilis (strain 168).